A 693-amino-acid polypeptide reads, in one-letter code: Elongation factor G (693 aa).

The region spanning 8-282 is the tr-type G domain; sequence EKTRNIGIMA…AVIDYLPSPL (275 aa). GTP contacts are provided by residues 17–24, 81–85, and 135–138; these read AHVDAGKT, DTPGH, and NKMD.

This sequence belongs to the TRAFAC class translation factor GTPase superfamily. Classic translation factor GTPase family. EF-G/EF-2 subfamily.

Its subcellular location is the cytoplasm. In terms of biological role, catalyzes the GTP-dependent ribosomal translocation step during translation elongation. During this step, the ribosome changes from the pre-translocational (PRE) to the post-translocational (POST) state as the newly formed A-site-bound peptidyl-tRNA and P-site-bound deacylated tRNA move to the P and E sites, respectively. Catalyzes the coordinated movement of the two tRNA molecules, the mRNA and conformational changes in the ribosome. This Streptococcus pneumoniae (strain ATCC 700669 / Spain 23F-1) protein is Elongation factor G.